The chain runs to 460 residues: Glycine--tRNA ligase (460 aa).

Substrate contacts are provided by Arg-98 and Glu-172. Residues 204–206 (RNE), 214–219 (FRTREF), 288–289 (EL), and 332–335 (GADR) contribute to the ATP site. Residue 219–223 (FEQME) participates in substrate binding. 328-332 (EPSLG) lines the substrate pocket.

The protein belongs to the class-II aminoacyl-tRNA synthetase family. Homodimer.

The protein resides in the cytoplasm. It carries out the reaction tRNA(Gly) + glycine + ATP = glycyl-tRNA(Gly) + AMP + diphosphate. Functionally, catalyzes the attachment of glycine to tRNA(Gly). In Geobacillus kaustophilus (strain HTA426), this protein is Glycine--tRNA ligase.